The primary structure comprises 412 residues: Multifunctional CCA protein (412 aa).

ATP is bound by residues G8 and R11. CTP contacts are provided by G8 and R11. 2 residues coordinate Mg(2+): D21 and D23. 3 residues coordinate ATP: R91, R138, and R141. Residues R91, R138, and R141 each coordinate CTP. The HD domain occupies 229 to 334; the sequence is RGQHTLLALQ…LELFNQLDVW (106 aa).

This sequence belongs to the tRNA nucleotidyltransferase/poly(A) polymerase family. Bacterial CCA-adding enzyme type 1 subfamily. In terms of assembly, monomer. Can also form homodimers and oligomers. Mg(2+) is required as a cofactor. The cofactor is Ni(2+).

The enzyme catalyses a tRNA precursor + 2 CTP + ATP = a tRNA with a 3' CCA end + 3 diphosphate. It catalyses the reaction a tRNA with a 3' CCA end + 2 CTP + ATP = a tRNA with a 3' CCACCA end + 3 diphosphate. Catalyzes the addition and repair of the essential 3'-terminal CCA sequence in tRNAs without using a nucleic acid template. Adds these three nucleotides in the order of C, C, and A to the tRNA nucleotide-73, using CTP and ATP as substrates and producing inorganic pyrophosphate. tRNA 3'-terminal CCA addition is required both for tRNA processing and repair. Also involved in tRNA surveillance by mediating tandem CCA addition to generate a CCACCA at the 3' terminus of unstable tRNAs. While stable tRNAs receive only 3'-terminal CCA, unstable tRNAs are marked with CCACCA and rapidly degraded. This is Multifunctional CCA protein from Haemophilus ducreyi (strain 35000HP / ATCC 700724).